The sequence spans 249 residues: Esterase YjfP (249 aa).

Its function is as follows. Displays esterase activity toward palmitoyl-CoA and pNP-butyrate. In Escherichia coli (strain K12), this protein is Esterase YjfP (yjfP).